The sequence spans 32 residues: Cytochrome b6-f complex subunit 6 (32 aa).

A helical membrane pass occupies residues 6–26 (VFYIVFIALFFGIAVGIIFAI).

This sequence belongs to the PetL family. The 4 large subunits of the cytochrome b6-f complex are cytochrome b6, subunit IV (17 kDa polypeptide, PetD), cytochrome f and the Rieske protein, while the 4 small subunits are PetG, PetL, PetM and PetN. The complex functions as a dimer.

The protein localises to the cellular thylakoid membrane. Functionally, component of the cytochrome b6-f complex, which mediates electron transfer between photosystem II (PSII) and photosystem I (PSI), cyclic electron flow around PSI, and state transitions. PetL is important for photoautotrophic growth as well as for electron transfer efficiency and stability of the cytochrome b6-f complex. In Mastigocladus laminosus (Fischerella sp.), this protein is Cytochrome b6-f complex subunit 6.